The chain runs to 569 residues: MNGVLCSSSSSFHSYPSIFTKFQSSPIWSFSISVTPLCSRRAKRMAHSIARDTLGLTHTNQSDAPKISFAAKEIDLVEWKGDILTVGATEKDLARDGNSKFQNPLLQKLDSKLSGLLSEASSEEDFSGKAGQSTILRLPGLGSKRIALVGLGSPTSSTAAYRCLGEAAAAAAKSAQASNIAIALASTDGLSAELKLSSASAITTGAVLGTFEDNRFKSESKKPTLKSLDILGLGTGPEIEKKIKYAADVCAGVILGRELVNAPANVLTPAVLAEEAKKIASTYSDVFSANILDVEQCKELKMGSYLRVAAASANPAHFIHLCYKPSSGEIKKKIALVGKGLTFDSGGYNIKTGPGCSIELMKFDMGGAAAVLGAAKALGQIKPAGVEVHFIVAACENMISGTGMRPGDIITASNGKTIEVNNTDAEGRLTLSVGISCNQGVEKIVDLATLTGACVVALGPSIAGIFTPSDDLAKEVVAASEVSGEKLWRLPMEDSYWDSMKSGVADMVNTGGRPGGAITAALFLKQFVNEKVQWMHIDLAGPVWSDKKKNATGFGVSTLVEWVLKNSTN.

The N-terminal 48 residues, 1-48 (MNGVLCSSSSSFHSYPSIFTKFQSSPIWSFSISVTPLCSRRAKRMAHS), are a transit peptide targeting the chloroplast. Residues Lys-339 and Asp-344 each coordinate Mn(2+). Residue Lys-351 is part of the active site. The Mn(2+) site is built by Asp-364, Asp-424, and Glu-426. The active site involves Arg-428.

The protein belongs to the peptidase M17 family. As to quaternary structure, homohexamer (dimer of homotrimers). Mn(2+) serves as cofactor. In terms of tissue distribution, expressed constitutively at low levels. Expressed in vegetative and reproductive organs, including leaves, stems, roots, cotyledons (after imbibition), pistils, sepals, petals, stamens, and floral buds (at protein level). Present at very low levels in healthy leaves.

Its subcellular location is the plastid. The protein resides in the chloroplast. The enzyme catalyses Release of an N-terminal amino acid, Xaa-|-Yaa-, in which Xaa is preferably Leu, but may be other amino acids including Pro although not Arg or Lys, and Yaa may be Pro. Amino acid amides and methyl esters are also readily hydrolyzed, but rates on arylamides are exceedingly low.. The catalysed reaction is Release of N-terminal proline from a peptide.. In terms of biological role, catalyzes the removal of unsubstituted N-terminal amino acids from various peptides. When associated as homohexamer, catalyzes the proteolyzes of Xaa-Leu dipeptides. Possesses leucine aminopeptidase activity against the model substrate leucine-amido methyl coumarin. Presumably involved in the processing and regular turnover of intracellular proteins. Its function is as follows. Functions as a molecular chaperone to protect proteins from heat-induced damage. This chain is Neutral leucine aminopeptidase, chloroplastic, found in Solanum lycopersicum (Tomato).